Reading from the N-terminus, the 224-residue chain is 3-dehydroquinate dehydratase (224 aa).

3-dehydroquinate-binding positions include Glu30 to Arg32 and Arg62. His118 functions as the Proton donor/acceptor in the catalytic mechanism. Residue Lys143 is the Schiff-base intermediate with substrate of the active site. The 3-dehydroquinate site is built by Arg186, Ser205, and Gln209.

The protein belongs to the type-I 3-dehydroquinase family. In terms of assembly, homodimer.

It carries out the reaction 3-dehydroquinate = 3-dehydroshikimate + H2O. Its pathway is metabolic intermediate biosynthesis; chorismate biosynthesis; chorismate from D-erythrose 4-phosphate and phosphoenolpyruvate: step 3/7. Involved in the third step of the chorismate pathway, which leads to the biosynthesis of aromatic amino acids. Catalyzes the cis-dehydration of 3-dehydroquinate (DHQ) and introduces the first double bond of the aromatic ring to yield 3-dehydroshikimate. The chain is 3-dehydroquinate dehydratase from Streptococcus suis (strain 98HAH33).